Consider the following 209-residue polypeptide: Redox-sensing transcriptional repressor Rex (209 aa).

The H-T-H motif DNA-binding region spans Leu-16 to Phe-55. Position 90–95 (Gly-90–Gly-95) interacts with NAD(+).

This sequence belongs to the transcriptional regulatory Rex family. Homodimer.

The protein localises to the cytoplasm. Modulates transcription in response to changes in cellular NADH/NAD(+) redox state. In Bacillus cereus (strain Q1), this protein is Redox-sensing transcriptional repressor Rex.